The chain runs to 419 residues: Serine hydroxymethyltransferase (419 aa).

(6S)-5,6,7,8-tetrahydrofolate-binding positions include Leu-121 and 125 to 127 (GHL). Lys-229 bears the N6-(pyridoxal phosphate)lysine mark. Residue 354 to 356 (SPF) coordinates (6S)-5,6,7,8-tetrahydrofolate.

Belongs to the SHMT family. As to quaternary structure, homodimer. Pyridoxal 5'-phosphate is required as a cofactor.

The protein localises to the cytoplasm. It carries out the reaction (6R)-5,10-methylene-5,6,7,8-tetrahydrofolate + glycine + H2O = (6S)-5,6,7,8-tetrahydrofolate + L-serine. The protein operates within one-carbon metabolism; tetrahydrofolate interconversion. It functions in the pathway amino-acid biosynthesis; glycine biosynthesis; glycine from L-serine: step 1/1. Catalyzes the reversible interconversion of serine and glycine with tetrahydrofolate (THF) serving as the one-carbon carrier. This reaction serves as the major source of one-carbon groups required for the biosynthesis of purines, thymidylate, methionine, and other important biomolecules. Also exhibits THF-independent aldolase activity toward beta-hydroxyamino acids, producing glycine and aldehydes, via a retro-aldol mechanism. This is Serine hydroxymethyltransferase from Coxiella burnetii (strain CbuK_Q154) (Coxiella burnetii (strain Q154)).